The sequence spans 1032 residues: Unconventional myosin-Ih (1032 aa).

Residues 12 to 701 (GVQDFVLLDA…TLFATEDAFE (690 aa)) form the Myosin motor domain. 105–112 (GESGAGKT) is an ATP binding site. At Ser-365 the chain carries Phosphoserine. Residues 578-600 (LSSLLETLISKEPSYIRCIKPND) are actin-binding. IQ domains lie at 704–726 (KHQL…EYVK) and 727–756 (KRQA…AVRI). The TH1 domain maps to 855–1029 (KDGYTESLNQ…NGQLTVVSVR (175 aa)).

It belongs to the TRAFAC class myosin-kinesin ATPase superfamily. Myosin family.

Myosins are actin-based motor molecules with ATPase activity. Unconventional myosins serve in intracellular movements. Their highly divergent tails are presumed to bind to membranous compartments, which would be moved relative to actin filaments. This chain is Unconventional myosin-Ih (MYO1H), found in Homo sapiens (Human).